We begin with the raw amino-acid sequence, 361 residues long: Molybdenum import ATP-binding protein ModC (361 aa).

The ABC transporter domain maps to Met-1 to Gln-228. Gly-31 to Thr-38 contacts ATP. Residues Gly-289–Asp-356 enclose the Mop domain.

Belongs to the ABC transporter superfamily. Molybdate importer (TC 3.A.1.8) family. In terms of assembly, the complex is composed of two ATP-binding proteins (ModC), two transmembrane proteins (ModB) and a solute-binding protein (ModA).

It is found in the cell inner membrane. It carries out the reaction molybdate(out) + ATP + H2O = molybdate(in) + ADP + phosphate + H(+). Its function is as follows. Part of the ABC transporter complex ModABC involved in molybdenum import. Responsible for energy coupling to the transport system. In Shewanella sp. (strain MR-4), this protein is Molybdenum import ATP-binding protein ModC.